Consider the following 257-residue polypeptide: Imidazole glycerol phosphate synthase subunit HisF (257 aa).

Active-site residues include aspartate 12 and aspartate 131.

The protein belongs to the HisA/HisF family. In terms of assembly, heterodimer of HisH and HisF.

It is found in the cytoplasm. The catalysed reaction is 5-[(5-phospho-1-deoxy-D-ribulos-1-ylimino)methylamino]-1-(5-phospho-beta-D-ribosyl)imidazole-4-carboxamide + L-glutamine = D-erythro-1-(imidazol-4-yl)glycerol 3-phosphate + 5-amino-1-(5-phospho-beta-D-ribosyl)imidazole-4-carboxamide + L-glutamate + H(+). It participates in amino-acid biosynthesis; L-histidine biosynthesis; L-histidine from 5-phospho-alpha-D-ribose 1-diphosphate: step 5/9. In terms of biological role, IGPS catalyzes the conversion of PRFAR and glutamine to IGP, AICAR and glutamate. The HisF subunit catalyzes the cyclization activity that produces IGP and AICAR from PRFAR using the ammonia provided by the HisH subunit. The polypeptide is Imidazole glycerol phosphate synthase subunit HisF (Rhodococcus jostii (strain RHA1)).